A 203-amino-acid chain; its full sequence is DNA-directed RNA polymerase III subunit rpc8 (203 aa).

It belongs to the eukaryotic RPB7/RPC8 RNA polymerase subunit family. Component of the RNA polymerase III (Pol III) complex consisting of 17 subunits. Rpc25/rpc8 and rpc17/rpc9 form a Pol III subcomplex.

It is found in the cytoplasm. The protein resides in the nucleus. Its function is as follows. DNA-dependent RNA polymerase catalyzes the transcription of DNA into RNA using the four ribonucleoside triphosphates as substrates. Specific peripheric component of RNA polymerase III which synthesizes small RNAs, such as 5S rRNA and tRNA. The protein is DNA-directed RNA polymerase III subunit rpc8 (rpc25) of Schizosaccharomyces pombe (strain 972 / ATCC 24843) (Fission yeast).